We begin with the raw amino-acid sequence, 592 residues long: Frizzled-9 (592 aa).

The first 23 residues, 1-23 (MAVPPLLRGALLLWQLLATGGAA), serve as a signal peptide directing secretion. Residues 24–230 (LEIGRFDPER…EVFWSRRDKD (207 aa)) lie on the Extracellular side of the membrane. In terms of domain architecture, FZ spans 35-156 (RGPAPCQAME…NDPHALCMEA (122 aa)). 5 disulfides stabilise this stretch: C40–C101, C48–C94, C85–C123, C112–C153, and C116–C140. The segment at 59–173 (PNLLGHTSQG…PTEPHKGLGM (115 aa)) is required for Wnt-activated receptor activity. Residues 231 to 251 (FALVWMAVWSALCFFSTAFTV) traverse the membrane as a helical segment. Residues 252 to 267 (FTFLLEPHRFQYPERP) lie on the Cytoplasmic side of the membrane. The chain crosses the membrane as a helical span at residues 268 to 288 (IIFLSMCYNVYSLAFLIRAVA). Topologically, residues 289–314 (GAQSVACDQEAGALYVIQEGLENTGC) are extracellular. A helical transmembrane segment spans residues 315 to 335 (TLVFLLLYYFGMASSLWWVVL). At 336–356 (TLTWFLAAGKKWGHEAIEAHG) the chain is on the cytoplasmic side. A helical membrane pass occupies residues 357 to 377 (SYFHMAAWGLPALKTIVVLTL). The Extracellular segment spans residues 378–401 (RKVAGDELTGLCYVASMDPAALTG). Residues 402–422 (FVLVPLSCYLVLGTSFLLTGF) traverse the membrane as a helical segment. The Cytoplasmic segment spans residues 423–448 (VALFHIRKIMKTGGTNTEKLEKLMVK). A helical transmembrane segment spans residues 449–469 (IGVFSILYTVPATCVIVCYVY). The Extracellular segment spans residues 470–509 (ERLNMDFWRLRATEQPCTAAAVPGGRRDCSLPGGSVPTVA). Residues 510 to 530 (VFMLKIFMSLVVGITSGVWVW) form a helical membrane-spanning segment. Over 531–592 (SSKTFQTWQS…DPSLENPTHL (62 aa)) the chain is Cytoplasmic. Residues 533–538 (KTFQTW) carry the Lys-Thr-X-X-X-Trp motif, mediates interaction with the PDZ domain of Dvl family members motif. Residues 555–592 (ACRTPGGYGRGTHCHYKAPTVVLHMTKTDPSLENPTHL) form a required for CTNNB1 accumulation and TCF transcription factor activity region.

This sequence belongs to the G-protein coupled receptor Fz/Smo family. Post-translationally, ubiquitinated by ZNRF3, leading to its degradation by the proteasome.

The protein resides in the cell membrane. Receptor for WNT2 that is coupled to the beta-catenin canonical signaling pathway, which leads to the activation of disheveled proteins, inhibition of GSK-3 kinase, nuclear accumulation of beta-catenin and activation of Wnt target genes. Plays a role in neuromuscular junction (NMJ) assembly by negatively regulating the clustering of acetylcholine receptors (AChR) through the beta-catenin canonical signaling pathway. May play a role in neural progenitor cells (NPCs) viability through the beta-catenin canonical signaling pathway by negatively regulating cell cycle arrest leading to inhibition of neuron apoptotic process. During hippocampal development, regulates neuroblast proliferation and apoptotic cell death. Controls bone formation through non canonical Wnt signaling mediated via ISG15. Positively regulates bone regeneration through non canonical Wnt signaling. This Rattus norvegicus (Rat) protein is Frizzled-9.